The following is a 129-amino-acid chain: Ferredoxin-1 (129 aa).

Residues 29–120 (SDMDLDDEDY…EVKIVYNAKH (92 aa)) form the 2Fe-2S ferredoxin-type domain. 4 residues coordinate [2Fe-2S] cluster: Cys64, Cys69, Cys72, and Cys103.

It belongs to the 2Fe2S plant-type ferredoxin family. Requires [2Fe-2S] cluster as cofactor.

In terms of biological role, ferredoxins are iron-sulfur proteins that transfer electrons in a wide variety of metabolic reactions. This is Ferredoxin-1 (fer1) from Haloarcula marismortui (strain ATCC 43049 / DSM 3752 / JCM 8966 / VKM B-1809) (Halobacterium marismortui).